The chain runs to 188 residues: Protein TIFY 9 (188 aa).

Residues 20-41 (DADDRHAKSGGSSASSSSSIRG) are disordered. Residues 28–38 (SGGSSASSSSS) show a composition bias toward low complexity. In terms of domain architecture, Tify spans 80 to 114 (AAAAAAPMTLFYNGSVAVFDVSHDKAEAIMRMATE). The Jas signature appears at 135 to 160 (PLTRTKSLQRFLSKRKERLTSLGPYQ). Positions 156-188 (LGPYQVGGPAAVGATTSTTTKSFLAKEEEHTAS) are disordered. Residues 179 to 188 (LAKEEEHTAS) show a composition bias toward basic and acidic residues.

Belongs to the TIFY/JAZ family. In terms of processing, ubiquitinated. Targeted for degradation by the SCF(COI1) E3 ubiquitin ligase-proteasome pathway during jasmonate signaling.

Its function is as follows. Repressor of jasmonate responses. In Oryza sativa subsp. indica (Rice), this protein is Protein TIFY 9.